We begin with the raw amino-acid sequence, 135 residues long: MAALRPLVKPKIVKKRTKKFIRHQSDRYVKIKWNWRKPRGIDNRVRRRFKGQILMPNIGYRSNKKTKHTLSSGFRKFLVHNIKEPEVLLMCNKSYRAEIAHNVSSKNRKAIVERAAQLAIRVTNPNTRLHSEENE.

Belongs to the eukaryotic ribosomal protein eL32 family.

This Mus musculus (Mouse) protein is Putative large ribosomal subunit protein eL32' (Rpl32-ps).